The following is a 126-amino-acid chain: Histone H2B type 1-J (126 aa).

Over residues 1–12 (MPEPAKSAPAPK) the composition is skewed to low complexity. Residues 1-35 (MPEPAKSAPAPKKGSKKAVTKAQKKDGKKRKRSRK) are disordered. Position 2 is an N-acetylproline (P2). E3 carries the post-translational modification ADP-ribosyl glutamic acid. The residue at position 6 (K6) is an N6-(2-hydroxyisobutyryl)lysine; alternate. N6-(beta-hydroxybutyryl)lysine; alternate is present on K6. K6 is subject to N6-acetyllysine; alternate. At K6 the chain carries N6-butyryllysine; alternate. K6 is subject to N6-crotonyllysine; alternate. K6 carries the post-translational modification N6-lactoyllysine; alternate. K6 is covalently cross-linked (Glycyl lysine isopeptide (Lys-Gly) (interchain with G-Cter in SUMO2); alternate). S7 carries the post-translational modification ADP-ribosylserine. Position 12 is an N6-(beta-hydroxybutyryl)lysine; alternate (K12). N6-acetyllysine; alternate is present on residues K12 and K13. K12 and K13 each carry N6-crotonyllysine; alternate. K12 carries the post-translational modification N6-lactoyllysine; alternate. K13 bears the N6-(2-hydroxyisobutyryl)lysine; alternate mark. S15 bears the Phosphoserine; by STK4/MST1 mark. 4 positions are modified to N6-acetyllysine; alternate: K16, K17, K21, and K24. 4 positions are modified to N6-crotonyllysine; alternate: K16, K17, K21, and K24. N6-lactoyllysine; alternate is present on residues K16, K17, K21, and K24. N6-(beta-hydroxybutyryl)lysine; alternate is present on residues K17 and K21. K17 carries the N6-glutaryllysine; alternate modification. Residues K21 and K24 each carry the N6-(2-hydroxyisobutyryl)lysine; alternate modification. The residue at position 21 (K21) is an N6-butyryllysine; alternate. K21 participates in a covalent cross-link: Glycyl lysine isopeptide (Lys-Gly) (interchain with G-Cter in SUMO2); alternate. K25 bears the N6-(2-hydroxyisobutyryl)lysine mark. Residue K35 is modified to N6-(2-hydroxyisobutyryl)lysine; alternate. K35 carries the post-translational modification N6-(beta-hydroxybutyryl)lysine; alternate. K35 carries the N6-crotonyllysine; alternate modification. K35 is modified (N6-glutaryllysine; alternate). An N6-succinyllysine; alternate modification is found at K35. Residue K35 forms a Glycyl lysine isopeptide (Lys-Gly) (interchain with G-Cter in ubiquitin); alternate linkage. The residue at position 36 (E36) is a PolyADP-ribosyl glutamic acid. Residue S37 is modified to Phosphoserine; by AMPK. 3 positions are modified to N6-(2-hydroxyisobutyryl)lysine; alternate: K44, K47, and K58. K44 is subject to N6-lactoyllysine; alternate. N6-glutaryllysine; alternate occurs at positions 44 and 47. K47 bears the N6-methyllysine; alternate mark. The residue at position 58 (K58) is an N6,N6-dimethyllysine; alternate. Residue R80 is modified to Dimethylated arginine. K86 carries the N6-(2-hydroxyisobutyryl)lysine; alternate modification. N6-(beta-hydroxybutyryl)lysine; alternate is present on K86. K86 carries the N6-acetyllysine; alternate modification. The residue at position 86 (K86) is an N6-lactoyllysine; alternate. K86 carries the post-translational modification N6,N6,N6-trimethyllysine; alternate. Omega-N-methylarginine occurs at positions 87 and 93. K109 is subject to N6-(2-hydroxyisobutyryl)lysine; alternate. The residue at position 109 (K109) is an N6-lactoyllysine; alternate. The residue at position 109 (K109) is an N6-glutaryllysine; alternate. K109 bears the N6-methyllysine; alternate mark. The O-linked (GlcNAc) serine glycan is linked to S113. T116 is subject to Phosphothreonine. An N6-(2-hydroxyisobutyryl)lysine; alternate mark is found at K117 and K121. An N6-(beta-hydroxybutyryl)lysine; alternate mark is found at K117 and K121. 2 positions are modified to N6-lactoyllysine; alternate: K117 and K121. K117 and K121 each carry N6-glutaryllysine; alternate. Residues K117 and K121 each carry the N6-succinyllysine; alternate modification. At K117 the chain carries N6-malonyllysine; alternate. At K117 the chain carries N6-methylated lysine; alternate. K121 participates in a covalent cross-link: Glycyl lysine isopeptide (Lys-Gly) (interchain with G-Cter in ubiquitin); alternate.

It belongs to the histone H2B family. In terms of assembly, the nucleosome is a histone octamer containing two molecules each of H2A, H2B, H3 and H4 assembled in one H3-H4 heterotetramer and two H2A-H2B heterodimers. The octamer wraps approximately 147 bp of DNA. Heterodimer H2BC11 and H2AZ1 interacts with VPS72 (via N-terminal domain). Post-translationally, monoubiquitination at Lys-35 (H2BK34Ub) by the MSL1/MSL2 dimer is required for histone H3 'Lys-4' (H3K4me) and 'Lys-79' (H3K79me) methylation and transcription activation at specific gene loci, such as HOXA9 and MEIS1 loci. Similarly, monoubiquitination at Lys-121 (H2BK120Ub) by the RNF20/40 complex gives a specific tag for epigenetic transcriptional activation and is also prerequisite for histone H3 'Lys-4' and 'Lys-79' methylation. It also functions cooperatively with the FACT dimer to stimulate elongation by RNA polymerase II. H2BK120Ub also acts as a regulator of mRNA splicing: deubiquitination by USP49 is required for efficient cotranscriptional splicing of a large set of exons. In terms of processing, phosphorylation at Ser-37 (H2BS36ph) by AMPK in response to stress promotes transcription. Phosphorylated on Ser-15 (H2BS14ph) by STK4/MST1 during apoptosis; which facilitates apoptotic chromatin condensation. Also phosphorylated on Ser-15 in response to DNA double strand breaks (DSBs), and in correlation with somatic hypermutation and immunoglobulin class-switch recombination. GlcNAcylation at Ser-113 promotes monoubiquitination of Lys-121. It fluctuates in response to extracellular glucose, and associates with transcribed genes. Post-translationally, ADP-ribosylated by PARP1 or PARP2 on Ser-7 (H2BS6ADPr) in response to DNA damage. H2BS6ADPr promotes recruitment of CHD1L. Mono-ADP-ribosylated on Glu-3 (H2BE2ADPr) by PARP3 in response to single-strand breaks. Poly ADP-ribosylation on Glu-36 (H2BE35ADPr) by PARP1 regulates adipogenesis: it inhibits phosphorylation at Ser-37 (H2BS36ph), thereby blocking expression of pro-adipogenetic genes. In terms of processing, crotonylation (Kcr) is specifically present in male germ cells and marks testis-specific genes in post-meiotic cells, including X-linked genes that escape sex chromosome inactivation in haploid cells. Crotonylation marks active promoters and enhancers and confers resistance to transcriptional repressors. It is also associated with post-meiotically activated genes on autosomes. Lactylated in macrophages by EP300/P300 by using lactoyl-CoA directly derived from endogenous or exogenous lactate, leading to stimulates gene transcription.

It localises to the nucleus. Its subcellular location is the chromosome. Its function is as follows. Core component of nucleosome. Nucleosomes wrap and compact DNA into chromatin, limiting DNA accessibility to the cellular machineries which require DNA as a template. Histones thereby play a central role in transcription regulation, DNA repair, DNA replication and chromosomal stability. DNA accessibility is regulated via a complex set of post-translational modifications of histones, also called histone code, and nucleosome remodeling. Functionally, has broad antibacterial activity. May contribute to the formation of the functional antimicrobial barrier of the colonic epithelium, and to the bactericidal activity of amniotic fluid. This Homo sapiens (Human) protein is Histone H2B type 1-J.